The primary structure comprises 731 residues: Catalase-peroxidase 2 (731 aa).

The segment covering 1 to 10 (MAETPNSDMS) has biased composition (polar residues). The disordered stretch occupies residues 1-26 (MAETPNSDMSGATGGRSKRPKSNQDW). The segment at residues 95-218 (WHSAGTYRTA…LGASVMGLIY (124 aa)) is a cross-link (tryptophyl-tyrosyl-methioninium (Trp-Tyr) (with M-244)). H96 functions as the Proton acceptor in the catalytic mechanism. The tryptophyl-tyrosyl-methioninium (Tyr-Met) (with W-95) cross-link spans 218 to 244 (YVNPEGPDGNPDPEASAKNIRQTFDRM). H259 is a heme b binding site.

In terms of assembly, homodimer. Requires heme b as cofactor. Formation of the three residue Trp-Tyr-Met cross-link is important for the catalase, but not the peroxidase activity of the enzyme.

It carries out the reaction H2O2 + AH2 = A + 2 H2O. The enzyme catalyses 2 H2O2 = O2 + 2 H2O. Bifunctional enzyme with both catalase and broad-spectrum peroxidase activity. In Haloarcula marismortui (strain ATCC 43049 / DSM 3752 / JCM 8966 / VKM B-1809) (Halobacterium marismortui), this protein is Catalase-peroxidase 2.